Consider the following 497-residue polypeptide: Probable small intestine urate exporter (497 aa).

Residues N47, N56, N66, N75, and N90 are each glycosylated (N-linked (GlcNAc...) asparagine). The next 10 membrane-spanning stretches (helical) occupy residues 149–169 (SFLTLFIPLAANAGVALLIVL), 171–191 (IVQGIAQVMVLTGQYSIWVKW), 203–223 (IAGSGSMLGSFIVLLAGGLLC), 230–250 (YVFYIFGGIGCACCPLWFPLI), 292–312 (LPLWAILVSYFCEYWLFYTIM), 332–352 (ILSALPFVVGCICIILGGLLA), 368–388 (KLFTAIGVLFPSVILVSLPWV), 398–418 (FLVLSSAISSFCESGALVNFL), 431–451 (LLQVFAHIAGAISPTAAGFFI), and 461–481 (NVFLLSAAVNISGLVFYLIFG).

Belongs to the major facilitator superfamily. Sodium/anion cotransporter family. As to expression, abundantly expressed in pancreas, liver, colon and small intestine, less in kidney. Not detected in the adrenal glands, brain, placenta, heart, testis, skeletal muscle, and lungs.

It localises to the apical cell membrane. The enzyme catalyses 3 Na(+)(out) + phosphate(out) = 3 Na(+)(in) + phosphate(in). It carries out the reaction urate(out) + n chloride(in) = urate(in) + n chloride(out). It catalyses the reaction L-thyroxine(out) = L-thyroxine(in). The catalysed reaction is 3,3',5-triiodo-L-thyronine(out) = 3,3',5-triiodo-L-thyronine(in). In terms of biological role, acts as a membrane potential-dependent organic anion transporter, the transport requires a low concentration of chloride ions. Mediates chloride-dependent transport of urate. Mediates sodium-independent high affinity transport of thyroid hormones including L-thyroxine (T4) and 3,3',5-triiodo-L-thyronine (T3). Can actively transport inorganic phosphate into cells via Na(+) cotransport. The sequence is that of Probable small intestine urate exporter (SLC17A4) from Homo sapiens (Human).